The following is a 384-amino-acid chain: Probable peptidoglycan glycosyltransferase FtsW (384 aa).

The Cytoplasmic segment spans residues 1 to 19 (MAAVWRWFVPERPSFYDRG). The chain crosses the membrane as a helical span at residues 20–40 (LLALTFSLMGIGLMMVASASI). The Periplasmic portion of the chain corresponds to 41 to 54 (KEGPGGDMFYFTKR). A helical membrane pass occupies residues 55–75 (HLIFLFVCLGIGVGTLYLPLE). At 76–83 (RWREWSGR) the chain is on the cytoplasmic side. Residues 84–104 (LLVGALGLLFAVLAVGRTVNG) form a helical membrane-spanning segment. At 105-110 (AKRWIG) the chain is on the periplasmic side. The chain crosses the membrane as a helical span at residues 111–131 (FGFFNIQPAELAKLALIVFIA). Topologically, residues 132–143 (SYLVRRSDEVRG) are cytoplasmic. The chain crosses the membrane as a helical span at residues 144 to 164 (NIAGFVKPLAVVFLLAIMLLA). Over 165-166 (QP) the chain is Periplasmic. A helical membrane pass occupies residues 167 to 187 (DLGSVVVLFVCTFGLLFIGGA). Residue lysine 188 is a topological domain, cytoplasmic. The helical transmembrane segment at 189–209 (LVQFIAIIVAGLSALAGLIIY) threads the bilayer. Over 210–267 (EPYRLRRVTSFLDPWADPFGSGYQLTQSLMAFGRGGFFGQGLGNSVQKLSYLPEAHTD) the chain is Periplasmic. A helical membrane pass occupies residues 268 to 288 (FVFAILGEELGYFGVLVVLFL). Residues 289–316 (QLLLAMKALQIGRTALLRSKFFEGYMAC) are Cytoplasmic-facing. The helical transmembrane segment at 317–337 (GIGIWFSFQTVVNVGAAAGML) threads the bilayer. At 338–343 (PTKGLT) the chain is on the periplasmic side. Residues 344 to 364 (LPLVSYGGSSLIAITMAVAIL) traverse the membrane as a helical segment. Topologically, residues 365-384 (LRIDFERRLDTSHVIQREAA) are cytoplasmic.

Belongs to the SEDS family. FtsW subfamily.

The protein localises to the cell inner membrane. The catalysed reaction is [GlcNAc-(1-&gt;4)-Mur2Ac(oyl-L-Ala-gamma-D-Glu-L-Lys-D-Ala-D-Ala)](n)-di-trans,octa-cis-undecaprenyl diphosphate + beta-D-GlcNAc-(1-&gt;4)-Mur2Ac(oyl-L-Ala-gamma-D-Glu-L-Lys-D-Ala-D-Ala)-di-trans,octa-cis-undecaprenyl diphosphate = [GlcNAc-(1-&gt;4)-Mur2Ac(oyl-L-Ala-gamma-D-Glu-L-Lys-D-Ala-D-Ala)](n+1)-di-trans,octa-cis-undecaprenyl diphosphate + di-trans,octa-cis-undecaprenyl diphosphate + H(+). The protein operates within cell wall biogenesis; peptidoglycan biosynthesis. Its function is as follows. Peptidoglycan polymerase that is essential for cell division. The protein is Probable peptidoglycan glycosyltransferase FtsW of Tolumonas auensis (strain DSM 9187 / NBRC 110442 / TA 4).